Here is a 714-residue protein sequence, read N- to C-terminus: Fatty acid oxidation complex subunit alpha (714 aa).

Residues 1–190 (MEMTSAFTLN…KLGLVDDVVP (190 aa)) form an enoyl-CoA hydratase region. The 3-hydroxyacyl-CoA dehydrogenase stretch occupies residues 306 to 714 (APLNSVGILG…FWKTTATDLQ (409 aa)).

It in the N-terminal section; belongs to the enoyl-CoA hydratase/isomerase family. The protein in the central section; belongs to the 3-hydroxyacyl-CoA dehydrogenase family. As to quaternary structure, heterotetramer of two alpha chains (FadJ) and two beta chains (FadI).

The protein resides in the cytoplasm. It carries out the reaction a (3S)-3-hydroxyacyl-CoA = a (2E)-enoyl-CoA + H2O. It catalyses the reaction a 4-saturated-(3S)-3-hydroxyacyl-CoA = a (3E)-enoyl-CoA + H2O. The enzyme catalyses a (3S)-3-hydroxyacyl-CoA + NAD(+) = a 3-oxoacyl-CoA + NADH + H(+). The catalysed reaction is (3S)-3-hydroxybutanoyl-CoA = (3R)-3-hydroxybutanoyl-CoA. The protein operates within lipid metabolism; fatty acid beta-oxidation. Functionally, catalyzes the formation of a hydroxyacyl-CoA by addition of water on enoyl-CoA. Also exhibits 3-hydroxyacyl-CoA epimerase and 3-hydroxyacyl-CoA dehydrogenase activities. The sequence is that of Fatty acid oxidation complex subunit alpha from Escherichia coli (strain 55989 / EAEC).